We begin with the raw amino-acid sequence, 318 residues long: L-carnitine dehydrogenase (318 aa).

Position 14–19 (14–19) interacts with NAD(+); the sequence is GSGVIG.

The protein belongs to the 3-hydroxyacyl-CoA dehydrogenase family. L-carnitine dehydrogenase subfamily. In terms of assembly, homodimer.

The protein localises to the cytoplasm. The enzyme catalyses carnitine + NAD(+) = 3-dehydrocarnitine + NADH + H(+). It functions in the pathway amine and polyamine metabolism; carnitine metabolism. Functionally, catalyzes the NAD(+)-dependent oxidation of L-carnitine to 3-dehydrocarnitine. The polypeptide is L-carnitine dehydrogenase (Pseudomonas syringae pv. syringae (strain B728a)).